The primary structure comprises 471 residues: P2X purinoceptor 2 (471 aa).

Residues 1–42 (MAAAQPKYPAGATARRLARGCWSALWDYETPKVIVVRNRRLG) are Cytoplasmic-facing. 6 disulfide bridges follow: Cys21–Cys439, Cys125–Cys176, Cys136–Cys159, Cys142–Cys170, Cys226–Cys236, and Cys270–Cys279. Residues 43–63 (VLYRAVQLLILLYFVWYVFIV) traverse the membrane as a helical segment. The Extracellular segment spans residues 64–337 (QKSYQESETG…IVHGQAGKFS (274 aa)). The ATP site is built by Lys81 and Lys83. Asn133 carries N-linked (GlcNAc...) asparagine glycosylation. N-linked (GlcNAc...) asparagine glycosylation occurs at Asn194. Thr196 provides a ligand contact to ATP. Positions 296, 300, and 302 each coordinate ATP. N-linked (GlcNAc...) asparagine glycosylation occurs at Asn310. An ATP-binding site is contributed by Lys319. Positions 320-333 (AYGIRIDVIVHGQA) are pore-forming motif. The helical transmembrane segment at 338 to 358 (LIPTIINLATALTSVGVGSFL) threads the bilayer. The Cytoplasmic segment spans residues 359–471 (CDWILLTFMN…PTDPKGLAQL (113 aa)). Residues 400–471 (GQAPPEPGHR…PTDPKGLAQL (72 aa)) are disordered.

This sequence belongs to the P2X receptor family. As to quaternary structure, homotrimer and heterotrimer; functional P2XRs are organized as homomeric and heteromeric trimers. Homotrimer. Forms heterotrimer with P2RX1. Forms heterotrimer with P2RX6. Forms heterotrimer with P2RX3. As to expression, expressed in both the central and peripheral nervous system, as well as in the pituitary gland.

It localises to the cell membrane. It carries out the reaction Ca(2+)(in) = Ca(2+)(out). The catalysed reaction is K(+)(in) = K(+)(out). It catalyses the reaction Na(+)(in) = Na(+)(out). Its activity is regulated as follows. Fast activation by external ATP. Exhibits slow desensitization during prolonged ATP activation. Not sensitive to the ATP agonist:alpha/beta-methylene-ATP. Its function is as follows. ATP-gated nonselective transmembrane cation channel permeable to potassium, sodium and calcium. Activation by extracellular ATP induces a variety of cellular responses, such as excitatory postsynaptic responses in sensory neurons, neuromuscular junctions (NMJ) formation, hearing, perception of taste and peristalsis. In the inner ear, regulates sound transduction and auditory neurotransmission, outer hair cell electromotility, inner ear gap junctions, and K(+) recycling. Mediates synaptic transmission between neurons and from neurons to smooth muscle. The protein is P2X purinoceptor 2 of Homo sapiens (Human).